Reading from the N-terminus, the 400-residue chain is Lysophospholipid transporter LplT (400 aa).

The next 12 membrane-spanning stretches (helical) occupy residues 19–39 (VIVA…ATLA), 53–73 (VLQM…GQIA), 91–111 (AGAA…LVGI), 139–159 (LMEA…GVLA), 164–184 (IAAL…NLFI), 195–213 (SWRL…VVLW), 227–247 (LFWG…PVAL), 257–277 (YLNA…AKLV), 281–301 (TVSR…IFSL), 304–324 (ALLP…FFVV), 352–372 (NSAM…GVPA), and 373–393 (VAIG…LWIW).

This sequence belongs to the major facilitator superfamily. LplT (TC 2.A.1.42) family.

The protein localises to the cell inner membrane. Catalyzes the facilitated diffusion of 2-acyl-glycero-3-phosphoethanolamine (2-acyl-GPE) into the cell. This Salmonella heidelberg (strain SL476) protein is Lysophospholipid transporter LplT.